We begin with the raw amino-acid sequence, 77 residues long: Apelin (77 aa).

Positions 1 to 22 (MNLSFCVQALLLLWLSLTAVCG) are cleaved as a signal peptide. Residues 23-41 (VPLMLPPDGKGLEEGNMRY) constitute a propeptide that is removed on maturation. The interval 45-77 (PRTSRTGPGAWQGGRRKFRRQRPRLSHKGPMPF) is disordered. Residues 58 to 71 (GRRKFRRQRPRLSH) show a composition bias toward basic residues.

Belongs to the apelin family. In terms of processing, several active peptides may be produced by proteolytic processing of the peptide precursor. As to expression, expressed in the lung, testis, ovary, uterus and mammary gland. Expressed in neurons in the thalamic paraventricular and hypothalamic supraoptic nuclei. The lung, testis and uterus mainly contain a large form that looks like apelin-36, whereas the mammary gland seems to contain 2 forms of apelin, a large form close to apelin-36 and a small form close to apelin-13 (at protein level). Widely expressed in the adult, with highest levels in the mammary gland of lactating animals, very high levels in the lung, intermediate levels in the spinal cord, ovary, adipose tissue, brain (neuronal cell bodies and fibers in the supraoptic and the paraventricular nuclei), heart and testis, and lowest levels in the pituitary gland, kidney, stomach, uterus and pancreas.

Its subcellular location is the secreted. It is found in the extracellular space. In terms of biological role, peptide hormone that functions as endogenous ligand for the G-protein-coupled apelin receptor (APLNR/APJ), that plays a role in cadiovascular homeostasis. Functions as a balanced agonist activating both G(i) protein pathway and beta-arrestin pathway of APLNR. Downstream G proteins activation, apelin can inhibit cAMP production and activate key intracellular effectors such as ERKs. On the other hand, APLNR activation induces beta-arrestin recruitment to the membrane leading to desensitization and internalization of the receptor. Apelin blunts cardiac hypertrophic induction from APLNR on response to pathological stimuli, but also induces myocardial hypertrophy under normal conditions. Apelin-36 dissociates more hardly than (pyroglu)apelin-13 from APLNR. Involved in the regulation of cardiac precursor cell movements during gastrulation and heart morphogenesis. Has an inhibitory effect on cytokine production in response to T-cell receptor/CD3 cross-linking; the oral intake of apelin in the colostrum and the milk might therefore modulate immune responses in neonates. Plays a role in early coronary blood vessels formation. Mediates myocardial contractility in an ERK1/2-dependent manner. May also have a role in the central control of body fluid homeostasis by influencing vasopressin release and drinking behavior. The chain is Apelin from Rattus norvegicus (Rat).